Here is a 276-residue protein sequence, read N- to C-terminus: Formamidopyrimidine-DNA glycosylase (276 aa).

Pro2 acts as the Schiff-base intermediate with DNA in catalysis. The active-site Proton donor is Glu3. Lys58 (proton donor; for beta-elimination activity) is an active-site residue. Residues His92, Arg111, and Arg154 each contribute to the DNA site. The FPG-type zinc finger occupies 239–273; the sequence is HAYQRTGDPCERCGTPIQRIVVGQRGTHFCPKCQV. Arg263 acts as the Proton donor; for delta-elimination activity in catalysis.

Belongs to the FPG family. Monomer. Zn(2+) serves as cofactor.

It carries out the reaction Hydrolysis of DNA containing ring-opened 7-methylguanine residues, releasing 2,6-diamino-4-hydroxy-5-(N-methyl)formamidopyrimidine.. It catalyses the reaction 2'-deoxyribonucleotide-(2'-deoxyribose 5'-phosphate)-2'-deoxyribonucleotide-DNA = a 3'-end 2'-deoxyribonucleotide-(2,3-dehydro-2,3-deoxyribose 5'-phosphate)-DNA + a 5'-end 5'-phospho-2'-deoxyribonucleoside-DNA + H(+). Its function is as follows. Involved in base excision repair of DNA damaged by oxidation or by mutagenic agents. Acts as a DNA glycosylase that recognizes and removes damaged bases. Has a preference for oxidized purines, such as 7,8-dihydro-8-oxoguanine (8-oxoG). Has AP (apurinic/apyrimidinic) lyase activity and introduces nicks in the DNA strand. Cleaves the DNA backbone by beta-delta elimination to generate a single-strand break at the site of the removed base with both 3'- and 5'-phosphates. This is Formamidopyrimidine-DNA glycosylase from Ligilactobacillus salivarius (strain UCC118) (Lactobacillus salivarius).